A 494-amino-acid chain; its full sequence is ETS translocation variant 4 (494 aa).

2 disordered regions span residues glutamate 82–glutamine 113 and alanine 139–alanine 201. The segment covering serine 100–glutamine 113 has biased composition (polar residues). Residues serine 176–serine 187 are compositionally biased toward low complexity. Positions tyrosine 188–proline 197 are enriched in polar residues. Residues leucine 350–valine 430 constitute a DNA-binding region (ETS).

Belongs to the ETS family. Post-translationally, phosphorylated. As to expression, in the embryo, expressed ubiquitously until the late blastula stage, in the marginal zone of gastrula stages, in the presumptive forebrain and hindbrain and in the trunk region of early somite stages. In later stages, also expressed in Rohon-Beard neurons, epiphysis, lateral line placodes, pectoral fin buds, developing lens and heart.

It localises to the nucleus. Its function is as follows. Transcriptional activator that binds to the (5'-CCGGA[AT]-3') motif. May control the acquisition of specific cell fates at an early stage during development of the somites and nervous system. May mediate the cellular effects of the fibroblast growth factors on embryogenesis. This chain is ETS translocation variant 4 (etv4), found in Danio rerio (Zebrafish).